The chain runs to 380 residues: Alanine racemase (380 aa).

The active-site Proton acceptor; specific for D-alanine is lysine 41. Lysine 41 is modified (N6-(pyridoxal phosphate)lysine). Substrate is bound at residue arginine 141. Tyrosine 271 (proton acceptor; specific for L-alanine) is an active-site residue. Methionine 318 contributes to the substrate binding site.

This sequence belongs to the alanine racemase family. Pyridoxal 5'-phosphate serves as cofactor.

It catalyses the reaction L-alanine = D-alanine. Its pathway is amino-acid biosynthesis; D-alanine biosynthesis; D-alanine from L-alanine: step 1/1. Its function is as follows. Catalyzes the interconversion of L-alanine and D-alanine. May also act on other amino acids. The polypeptide is Alanine racemase (alr) (Latilactobacillus sakei subsp. sakei (strain 23K) (Lactobacillus sakei subsp. sakei)).